Here is a 153-residue protein sequence, read N- to C-terminus: Probable phospholipase A2 homolog 2 (153 aa).

An N-terminal signal peptide occupies residues 1–25 (MRFFLKLAPRCSVLLLLLLVTASRG). Cystine bridges form between C42–C70, C46–C76, C51–C123, C63–C83, C82–C109, and C89–C102. Positions 62, 64, and 67 each coordinate Ca(2+). H86 is an active-site residue. D87 contributes to the Ca(2+) binding site.

Belongs to the phospholipase A2 family. The cofactor is Ca(2+).

Its subcellular location is the secreted. The catalysed reaction is a 1,2-diacyl-sn-glycero-3-phosphocholine + H2O = a 1-acyl-sn-glycero-3-phosphocholine + a fatty acid + H(+). In terms of biological role, PA2 catalyzes the calcium-dependent hydrolysis of the 2-acyl groups in 3-sn-phosphoglycerides. Releases lysophospholipids (LPLs) and free fatty acids (FFAs) from membrane phospholipids in response to hormones and other external stimuli. The polypeptide is Probable phospholipase A2 homolog 2 (PLA2-II) (Oryza sativa subsp. japonica (Rice)).